The chain runs to 406 residues: Tryptophan synthase beta chain (406 aa).

K99 carries the N6-(pyridoxal phosphate)lysine modification.

It belongs to the TrpB family. As to quaternary structure, tetramer of two alpha and two beta chains. Pyridoxal 5'-phosphate is required as a cofactor.

It carries out the reaction (1S,2R)-1-C-(indol-3-yl)glycerol 3-phosphate + L-serine = D-glyceraldehyde 3-phosphate + L-tryptophan + H2O. The protein operates within amino-acid biosynthesis; L-tryptophan biosynthesis; L-tryptophan from chorismate: step 5/5. Its function is as follows. The beta subunit is responsible for the synthesis of L-tryptophan from indole and L-serine. The protein is Tryptophan synthase beta chain of Chelativorans sp. (strain BNC1).